Here is a 252-residue protein sequence, read N- to C-terminus: Indole-3-glycerol phosphate synthase (252 aa).

Belongs to the TrpC family.

It catalyses the reaction 1-(2-carboxyphenylamino)-1-deoxy-D-ribulose 5-phosphate + H(+) = (1S,2R)-1-C-(indol-3-yl)glycerol 3-phosphate + CO2 + H2O. The protein operates within amino-acid biosynthesis; L-tryptophan biosynthesis; L-tryptophan from chorismate: step 4/5. The polypeptide is Indole-3-glycerol phosphate synthase (Listeria welshimeri serovar 6b (strain ATCC 35897 / DSM 20650 / CCUG 15529 / CIP 8149 / NCTC 11857 / SLCC 5334 / V8)).